The following is a 214-amino-acid chain: ATP-dependent Clp protease proteolytic subunit (214 aa).

Residue Ser113 is the Nucleophile of the active site. The active site involves His138.

Belongs to the peptidase S14 family. In terms of assembly, fourteen ClpP subunits assemble into 2 heptameric rings which stack back to back to give a disk-like structure with a central cavity, resembling the structure of eukaryotic proteasomes.

The protein resides in the cytoplasm. The enzyme catalyses Hydrolysis of proteins to small peptides in the presence of ATP and magnesium. alpha-casein is the usual test substrate. In the absence of ATP, only oligopeptides shorter than five residues are hydrolyzed (such as succinyl-Leu-Tyr-|-NHMec, and Leu-Tyr-Leu-|-Tyr-Trp, in which cleavage of the -Tyr-|-Leu- and -Tyr-|-Trp bonds also occurs).. Its function is as follows. Cleaves peptides in various proteins in a process that requires ATP hydrolysis. Has a chymotrypsin-like activity. Plays a major role in the degradation of misfolded proteins. The polypeptide is ATP-dependent Clp protease proteolytic subunit (Teredinibacter turnerae (strain ATCC 39867 / T7901)).